Reading from the N-terminus, the 327-residue chain is Chlorophenol reductase (327 aa).

The first 24 residues, 1 to 24, serve as a signal peptide directing secretion; that stretch reads MKKTLGIILSISLAFSVLALPIFA. The LysM domain maps to 65–110; the sequence is TYYTVVSGDFFWQIAAKHGLTIDALAKLNPQIKNVNLIFPGQKILV.

Cob(I)alamin is required as a cofactor.

Its subcellular location is the secreted. The protein resides in the cell wall. It is found in the cell membrane. With respect to regulation, inhibited by sulfide and to a lesser extent by nitrite. Its function is as follows. Reductive dechlorination of ortho-chlorophenols. Dechlorinates in the ortho position with respect to the hydroxyl group. The protein is Chlorophenol reductase of Desulfitobacterium hafniense (Desulfitobacterium frappieri).